A 357-amino-acid chain; its full sequence is Peptide chain release factor 1 (357 aa).

N5-methylglutamine is present on glutamine 235. A disordered region spans residues 285 to 305 (KRHNEASAMRSAQVGSGDRSE).

The protein belongs to the prokaryotic/mitochondrial release factor family. Post-translationally, methylated by PrmC. Methylation increases the termination efficiency of RF1.

It localises to the cytoplasm. Its function is as follows. Peptide chain release factor 1 directs the termination of translation in response to the peptide chain termination codons UAG and UAA. This is Peptide chain release factor 1 (prfA) from Chlamydia pneumoniae (Chlamydophila pneumoniae).